The following is a 378-amino-acid chain: Aminotransferase apf4 (378 aa).

R88 contacts pyridoxal 5'-phosphate. K189 carries the post-translational modification N6-(pyridoxal phosphate)lysine. Position 228 (E228) interacts with pyridoxal 5'-phosphate. The disordered stretch occupies residues 359–378 (ERGHNGQPTADPTRVIEMPE).

Belongs to the class-IV pyridoxal-phosphate-dependent aminotransferase family. It depends on pyridoxal 5'-phosphate as a cofactor.

It functions in the pathway secondary metabolite biosynthesis. In terms of biological role, aminotransferase; part of the gene cluster that mediates the biosynthesis of the cyclic tetrapeptide apicidin F (APF). The non-ribosomal peptide synthetase apf1 incorporates four different amino acids to produce apicidin F: L-phenylalanine, D-pipecolic acid (D-pip), N-methoxy-L-tryptophan and L-2-aminooctanedioic acid. L-Phenylalanine is the only proteinogenic amino acid directly used by apf1. The 3 other apf1 substrates are non-proteinogenic and have to be modified by other enzymes of the cluster. Lysine is converted to delta-1-pyrroline-5-carboxylate (P5C) which is reduced to L-pipecolic acid (L-pip) by apf3. L-pip is epimerized to D-pip, probably by apf1 activity, prior to incorporation. L-Tryptophan is N-oxidyzed by one of the cytochrome P450 monooxygenases (apf7 or apf8), and further methylated at the hydroxy group by the O-methyltransferase apf6 to yield N-methoxy-L-tryptophan. The synthesis of the fourth apf1 substrate is more complex. The fatty acid synthase apf5 is involved in the synthesis of the octanoic acid backbone of L-2-aminooctanedioic acid by fixing one acetyl-CoA unit and three malonyl-CoA units. Then one of the cytochrome P450 monooxygenases (apf7 or apf8) may oxidize this backbone to 2-oxooctanoic acid. The aminotransferase apf4 is predicted to catalyze the exchange of the keto group with an amino group. The next step would be the oxidation of 2-aminooctanoic acid by one of the cytochrome P450 monooxygenases (apf7 or apf8). The last step is the oxidation of 2-amino-8-hydroxyoctanoic acid to 2-aminooctanedioic acid is catalyzed by the FAD-dependent monooxygenase apf9. The chain is Aminotransferase apf4 from Gibberella fujikuroi (strain CBS 195.34 / IMI 58289 / NRRL A-6831) (Bakanae and foot rot disease fungus).